We begin with the raw amino-acid sequence, 154 residues long: Putative nuclear shuttle protein (154 aa).

The protein belongs to the nanoviridae nuclear shuttle protein family.

Its subcellular location is the host nucleus. It is found in the host cytoplasm. Its function is as follows. Putative nuclear shuttle protein. In Musa (BBTV), this protein is Putative nuclear shuttle protein (DNA-N).